We begin with the raw amino-acid sequence, 262 residues long: Ribosomal RNA small subunit methyltransferase A (262 aa).

S-adenosyl-L-methionine is bound by residues His-16, Leu-18, Gly-43, Glu-64, Asp-89, and Asn-109.

This sequence belongs to the class I-like SAM-binding methyltransferase superfamily. rRNA adenine N(6)-methyltransferase family. RsmA subfamily.

Its subcellular location is the cytoplasm. It catalyses the reaction adenosine(1518)/adenosine(1519) in 16S rRNA + 4 S-adenosyl-L-methionine = N(6)-dimethyladenosine(1518)/N(6)-dimethyladenosine(1519) in 16S rRNA + 4 S-adenosyl-L-homocysteine + 4 H(+). Its function is as follows. Specifically dimethylates two adjacent adenosines (A1518 and A1519) in the loop of a conserved hairpin near the 3'-end of 16S rRNA in the 30S particle. May play a critical role in biogenesis of 30S subunits. The sequence is that of Ribosomal RNA small subunit methyltransferase A from Xanthomonas campestris pv. campestris (strain 8004).